A 25-amino-acid chain; its full sequence is Unknown protein 7 (25 aa).

The interval 1 to 25 (MENGKVHVASMSGLSMPHMNEMLEK) is disordered.

The sequence is that of Unknown protein 7 from Pseudotsuga menziesii (Douglas-fir).